We begin with the raw amino-acid sequence, 178 residues long: Acireductone dioxygenase (178 aa).

Residues His87, His89, Glu93, and His132 each contribute to the Fe(2+) site. Residues His87, His89, Glu93, and His132 each coordinate Ni(2+).

Belongs to the acireductone dioxygenase (ARD) family. Requires Fe(2+) as cofactor. It depends on Ni(2+) as a cofactor.

The protein localises to the cytoplasm. It localises to the nucleus. The enzyme catalyses 1,2-dihydroxy-5-(methylsulfanyl)pent-1-en-3-one + O2 = 4-methylsulfanyl-2-oxobutanoate + formate + 2 H(+). The catalysed reaction is 1,2-dihydroxy-5-(methylsulfanyl)pent-1-en-3-one + O2 = 3-(methylsulfanyl)propanoate + CO + formate + 2 H(+). It functions in the pathway amino-acid biosynthesis; L-methionine biosynthesis via salvage pathway; L-methionine from S-methyl-5-thio-alpha-D-ribose 1-phosphate: step 5/6. Its function is as follows. Catalyzes 2 different reactions between oxygen and the acireductone 1,2-dihydroxy-3-keto-5-methylthiopentene (DHK-MTPene) depending upon the metal bound in the active site. Fe-containing acireductone dioxygenase (Fe-ARD) produces formate and 2-keto-4-methylthiobutyrate (KMTB), the alpha-ketoacid precursor of methionine in the methionine recycle pathway. Ni-containing acireductone dioxygenase (Ni-ARD) produces methylthiopropionate, carbon monoxide and formate, and does not lie on the methionine recycle pathway. In Candida albicans (strain SC5314 / ATCC MYA-2876) (Yeast), this protein is Acireductone dioxygenase.